The following is a 165-amino-acid chain: Protein SprT (165 aa).

The SprT-like domain occupies 22-163 (LAQANLKLGR…RCVHCGEQLT (142 aa)). Residue histidine 78 coordinates Zn(2+). The active site involves glutamate 79. Histidine 82 contacts Zn(2+).

This sequence belongs to the SprT family. Zn(2+) serves as cofactor.

The protein localises to the cytoplasm. The chain is Protein SprT from Escherichia fergusonii (strain ATCC 35469 / DSM 13698 / CCUG 18766 / IAM 14443 / JCM 21226 / LMG 7866 / NBRC 102419 / NCTC 12128 / CDC 0568-73).